The sequence spans 144 residues: Large ribosomal subunit protein uL15 (144 aa).

The interval 1-54 (MRLNTLSPAAGAKHAPKRVGRGMGSGLGKTAGRGHKGQKSRSGGGVRPGFEGGQ) is disordered. 2 stretches are compositionally biased toward gly residues: residues 21–31 (RGMGSGLGKTA) and 42–52 (SGGGVRPGFEG).

The protein belongs to the universal ribosomal protein uL15 family. As to quaternary structure, part of the 50S ribosomal subunit.

Its function is as follows. Binds to the 23S rRNA. The chain is Large ribosomal subunit protein uL15 from Shewanella oneidensis (strain ATCC 700550 / JCM 31522 / CIP 106686 / LMG 19005 / NCIMB 14063 / MR-1).